The following is a 458-amino-acid chain: UDP-N-acetylmuramoylalanine--D-glutamate ligase (458 aa).

124–130 (GSDGKTT) contacts ATP.

This sequence belongs to the MurCDEF family.

The protein localises to the cytoplasm. It carries out the reaction UDP-N-acetyl-alpha-D-muramoyl-L-alanine + D-glutamate + ATP = UDP-N-acetyl-alpha-D-muramoyl-L-alanyl-D-glutamate + ADP + phosphate + H(+). It participates in cell wall biogenesis; peptidoglycan biosynthesis. Functionally, cell wall formation. Catalyzes the addition of glutamate to the nucleotide precursor UDP-N-acetylmuramoyl-L-alanine (UMA). This is UDP-N-acetylmuramoylalanine--D-glutamate ligase from Clostridium botulinum (strain Loch Maree / Type A3).